A 381-amino-acid polypeptide reads, in one-letter code: Alkanesulfonate monooxygenase (381 aa).

The protein belongs to the SsuD family. As to quaternary structure, homotetramer.

It catalyses the reaction an alkanesulfonate + FMNH2 + O2 = an aldehyde + FMN + sulfite + H2O + 2 H(+). Catalyzes the desulfonation of aliphatic sulfonates. The chain is Alkanesulfonate monooxygenase from Escherichia coli (strain SMS-3-5 / SECEC).